The primary structure comprises 447 residues: MAGSEAVEDKEIKSAVSSCEAYFEKVQSRKNLPKSLQETLNSAFAGIPVSSFPQVPGGRVIEIQAETPVSEAVKILSDSKILSAPVINTDHESSLDWRERYLGIIDYSSIILWVLESAELAAIALSATSATAAGVGAGAVGALGVAALGMTGPVAAAGLAAAAVGAAVAGGVAAERGIGKDAPTAADKLGKDFYEVILQEEPFKSTTVRTILKSFRWAPFLPVSTESSMLSVMLLLSKYRLRNVPVIKTGEPDIKNYVTQSAVVHGLEGCKGRDWFDHISALPISDLGLPFMSPNEVISIESEELILEAFKRMRDNNIGGLPVVEGLNKKIVGNISMRDIRYLLLQPEVFSNFRQLTVKSFATKIATAGEEYGLAIPAITCRPDSTLGSVINSLASRSVHRVYVAAGDENELYGVITLRDVISCFVSEPPNYFENCLGFSVKEMLNR.

The residue at position 2 (Ala2) is an N-acetylalanine. Ser35 carries the phosphoserine modification. 4 consecutive CBS domains span residues 54-120 (QVPG…SAEL), 214-275 (SFRW…GRDW), 292-350 (MSPN…PEVF), and 374-433 (LAIP…PNYF).

Belongs to the 5'-AMP-activated protein kinase gamma subunit family. As to quaternary structure, subunit of a probable heterotrimeric complex consisting of an alpha catalytic (KIN10 or KIN11) subunit, and a beta (KINB) and a gamma (KING or SNF4) non-catalytic regulatory subunits.

Regulatory subunit of the probable trimeric SNF1-related protein kinase (SnRK) complex, which may play a role in a signal transduction cascade regulating gene expression and carbohydrate metabolism in higher plants. In Arabidopsis thaliana (Mouse-ear cress), this protein is SNF1-related protein kinase regulatory subunit gamma-1-like (CBSCBS2).